The chain runs to 194 residues: dTTP/UTP pyrophosphatase (194 aa).

Asp66 serves as the catalytic Proton acceptor.

It belongs to the Maf family. YhdE subfamily. A divalent metal cation serves as cofactor.

The protein localises to the cytoplasm. The enzyme catalyses dTTP + H2O = dTMP + diphosphate + H(+). It carries out the reaction UTP + H2O = UMP + diphosphate + H(+). Nucleoside triphosphate pyrophosphatase that hydrolyzes dTTP and UTP. May have a dual role in cell division arrest and in preventing the incorporation of modified nucleotides into cellular nucleic acids. The sequence is that of dTTP/UTP pyrophosphatase from Anaeromyxobacter dehalogenans (strain 2CP-1 / ATCC BAA-258).